The chain runs to 366 residues: MTSTENNNNGSDETQTTKLHFEDADESMHDGDDNNADVADDITSADYYFDSYSHFGIHEEMLKDVVRTKSYQDVIYKNKFLIKDKIVLDVGAGTGILSLFCAKAGAAHVYAVECSQMADTAKEIVKSNGFSDVITVLKGKIEEIELPVPKVDVIISEWMGYFLLYENMLDTVLYARNKWLVDGGIVLPDKASLYVTAIEDAHYKDDKVEFWDDVYGFDMSCIKRRAITEPLVDTVDGNQIVTDSKLLKTMDISKMAAGDASFTAPFKLVAQRNDHIHALVAYFDVSFTMCHKKMGFSTGPKSRATHWKQTVLYLEDVLTICEGETITGSMTIAQNKKNPRDVDIKLSYSLNGQHCNISRTHFYKMR.

In terms of domain architecture, SAM-dependent MTase PRMT-type spans 45–347 (ADYYFDSYSH…NPRDVDIKLS (303 aa)). Active-site residues include Glu-157 and Glu-166.

It belongs to the class I-like SAM-binding methyltransferase superfamily. Protein arginine N-methyltransferase family. In terms of assembly, interacts with FIB2 and PRMT11.

The protein resides in the nucleus. The protein localises to the cytoplasm. In terms of biological role, methylates (mono and asymmetric dimethylation) the guanidino nitrogens of arginyl residues present in a glycine and arginine-rich domain. Type I arginine methyltransferase active on both histones and non-histone proteins. Mediates the methylation of MED36A. The sequence is that of Probable protein arginine N-methyltransferase 1.2 (PRMT12) from Arabidopsis thaliana (Mouse-ear cress).